The following is a 305-amino-acid chain: UDP-3-O-acyl-N-acetylglucosamine deacetylase (305 aa).

The Zn(2+) site is built by histidine 79, histidine 238, and aspartate 242. Histidine 265 serves as the catalytic Proton donor.

It belongs to the LpxC family. Zn(2+) is required as a cofactor.

It catalyses the reaction a UDP-3-O-[(3R)-3-hydroxyacyl]-N-acetyl-alpha-D-glucosamine + H2O = a UDP-3-O-[(3R)-3-hydroxyacyl]-alpha-D-glucosamine + acetate. Its pathway is glycolipid biosynthesis; lipid IV(A) biosynthesis; lipid IV(A) from (3R)-3-hydroxytetradecanoyl-[acyl-carrier-protein] and UDP-N-acetyl-alpha-D-glucosamine: step 2/6. In terms of biological role, catalyzes the hydrolysis of UDP-3-O-myristoyl-N-acetylglucosamine to form UDP-3-O-myristoylglucosamine and acetate, the committed step in lipid A biosynthesis. This is UDP-3-O-acyl-N-acetylglucosamine deacetylase from Klebsiella pneumoniae (strain 342).